A 274-amino-acid polypeptide reads, in one-letter code: Penicillin-insensitive murein endopeptidase (274 aa).

The signal sequence occupies residues 1-19; sequence MKKTAIALLAWFVSSASLA. 3 cysteine pairs are disulfide-bonded: C44–C265, C187–C235, and C216–C223. 6 residues coordinate Zn(2+): H110, H113, D120, D147, H150, and H211. Residues 225 to 274 are disordered; the sequence is DQPLPPPGDGCGAELQSWFEPPKPGTTKPEKKTPPPLPPSCQALLDEHVL.

It belongs to the peptidase M74 family. Dimer. Requires Zn(2+) as cofactor.

The protein resides in the periplasm. Functionally, murein endopeptidase that cleaves the D-alanyl-meso-2,6-diamino-pimelyl amide bond that connects peptidoglycan strands. Likely plays a role in the removal of murein from the sacculus. This Salmonella heidelberg (strain SL476) protein is Penicillin-insensitive murein endopeptidase.